The primary structure comprises 451 residues: MNKKILFLGVGGIGVSALAIAAKRLGAHVAGYDSVANKLTAKLEALGIVIFTSPNGVDVANFDIVVYSSAILSSHPLLSQARSLGIQCLQRAMFLAVLMKDFSYSIAITGTHGKTTTSSVLATLLCQLDKYSSFIVGGVVKYADSNIQVNGTDKLVIEADESDASFLFLSPQVVIITNIDLDHMATYNNSYQTLLENFTDFVSKESVKSIYLCVDDQGCRDLLAKYNQSDKNVTSYGFSINADVQIYDYHIIDEITHFKIRYKDDDLSFKLQLPGRYNVQNATACIIACLDLGFKYEDIRNALIKVTGVARRFDLYTKVISGHQVTVIDDYGHHPVEVANSISAVRDRYPNKKIIHVFQPHRYTRNRDLIKDWPKALSLADQLILLPTYSADEQIIKGAESQDIVKGLSGYLLADGFDHAIYFLEKLANENTVILIQGAGDVTNLVEILSE.

110–116 (GTHGKTT) provides a ligand contact to ATP.

It belongs to the MurCDEF family.

The protein resides in the cytoplasm. It carries out the reaction UDP-N-acetyl-alpha-D-muramate + L-alanine + ATP = UDP-N-acetyl-alpha-D-muramoyl-L-alanine + ADP + phosphate + H(+). Its pathway is cell wall biogenesis; peptidoglycan biosynthesis. Cell wall formation. The protein is UDP-N-acetylmuramate--L-alanine ligase of Francisella tularensis subsp. tularensis (strain SCHU S4 / Schu 4).